The primary structure comprises 98 residues: Competence protein ComGC (98 aa).

The propeptide occupies 1–5 (MNEKG). Positions 4–29 (KGFTLVEMLIVLFIISILLLITIPNV) are may be involved in polymerization of ComGC. The residue at position 6 (Phe6) is an N-methylphenylalanine. Residues 6-26 (FTLVEMLIVLFIISILLLITI) form a helical membrane-spanning segment. Cysteines 41 and 81 form a disulfide.

This sequence belongs to the ComGC family. As to quaternary structure, the transformation pili are flexible filaments, consisting mainly of the major pilin ComGC and smaller amounts of the minor pilins, including at least ComGD, ComGF and ComGG. Homodimer. Forms higher-order multimers. Interacts with ComGG; the interaction is probably direct. In terms of processing, processing of ComGC in competent cells requires ComC, while stabilization, possibly by formation of a disulfide bond, requires BdbC and BdbD.

Its subcellular location is the cell membrane. The protein localises to the cell surface. It is found in the fimbrium. Functionally, major component of the type IV-like pilus (T4P) that plays a role in transformation. Transformation pili are dynamically extended and retracted, perhaps thereby promoting DNA uptake and transformation. Required for transformation and DNA binding. The sequence is that of Competence protein ComGC (comGC) from Bacillus subtilis (strain 168).